Here is a 902-residue protein sequence, read N- to C-terminus: Viral-enhancing factor (902 aa).

The region spanning 27 to 330 (HRRTEVGVVL…IFAWLYNPQR (304 aa)) is the Peptidase M60 domain. 10 N-linked (GlcNAc...) asparagine; by host glycosylation sites follow: Asn-73, Asn-265, Asn-278, Asn-339, Asn-540, Asn-593, Asn-594, Asn-620, Asn-782, and Asn-840.

In terms of biological role, involved in disruption of the peritrophic membrane and fusion of nucleocapsids with midgut cells. This Heliothis (HaGV) protein is Viral-enhancing factor (VEF).